A 260-amino-acid chain; its full sequence is MGSQHSSALTFCQRKKDDNPEDLLADRDQEEAIAQFPYVEFTGRNSITCHTCQGAGYIPAEQVNELVALIPHSDQRLRPQRTKQYVLLSVLLCLLASGLVFFFLFPHSVLVDDNGIKVTKVTFNEQDSLVVLDVTATLKIRNSNFYPVAVTNLFSQVQYMKAVVGSYTTTNVSLIAPRSEHLVNFTVKAEVGGPSSYVYFYCTLPAIRVHNIVIFMRTSVKISYIGHISQSTLETQHYVDCGVNSTAAQSLFLVPRGPHL.

The N-myristoyl glycine moiety is linked to residue G2. The chain crosses the membrane as a helical span at residues 85–105; that stretch reads YVLLSVLLCLLASGLVFFFLF. An N-linked (GlcNAc...) asparagine glycan is attached at N184. A helical membrane pass occupies residues 196-216; that stretch reads SYVYFYCTLPAIRVHNIVIFM.

It belongs to the TMEM106 family. In terms of assembly, interacts with TMEM106B.

It localises to the endoplasmic reticulum membrane. The protein localises to the membrane. The polypeptide is Transmembrane protein 106C (Tmem106c) (Mus musculus (Mouse)).